The chain runs to 100 residues: MELTPRDKDKLLLFTAALLAERRKAKGLKLNYPEAVALISAEIMEGAREGRTVAELMSAGTEILAREDVMDGVADMVHEVQVEATFPDGTKLVTVHNPIV.

Belongs to the urease gamma subunit family. Heterotrimer of UreA (gamma), UreB (beta) and UreC (alpha) subunits. Three heterotrimers associate to form the active enzyme.

Its subcellular location is the cytoplasm. It catalyses the reaction urea + 2 H2O + H(+) = hydrogencarbonate + 2 NH4(+). The protein operates within nitrogen metabolism; urea degradation; CO(2) and NH(3) from urea (urease route): step 1/1. The protein is Urease subunit gamma of Marinobacter nauticus (strain ATCC 700491 / DSM 11845 / VT8) (Marinobacter aquaeolei).